The following is a 281-amino-acid chain: Nucleotide-binding protein Noc_2797 (281 aa).

8–15 provides a ligand contact to ATP; that stretch reads GVSGSGKS. 58 to 61 is a binding site for GTP; it reads DARN.

This sequence belongs to the RapZ-like family.

In terms of biological role, displays ATPase and GTPase activities. The polypeptide is Nucleotide-binding protein Noc_2797 (Nitrosococcus oceani (strain ATCC 19707 / BCRC 17464 / JCM 30415 / NCIMB 11848 / C-107)).